Consider the following 149-residue polypeptide: Aquaporin-like protein 2 (149 aa).

Residues 1 to 35 form a disordered region; it reads MSNESNDLEKNISHLDPTGVDNAYIPPEQPETKHS. Over 1–47 the chain is Cytoplasmic; it reads MSNESNDLEKNISHLDPTGVDNAYIPPEQPETKHSRFNIDRDTLRNH. A helical membrane pass occupies residues 48–68; that stretch reads FIAAVGEFCGTFMFLWCAYVI. The Extracellular segment spans residues 69-89; that stretch reads CNVANHDVALTTEPEGSHPGQ. The helical transmembrane segment at 90 to 110 threads the bilayer; the sequence is LIMIALGFGFSVMFSIWCFWW. Residues 111–149 are Cytoplasmic-facing; sequence GFEPSRFSLFVFGQSHLSSQMCSDVVSSDHCWDGCWWCR.

Belongs to the MIP/aquaporin (TC 1.A.8) family.

The protein resides in the endoplasmic reticulum membrane. The protein localises to the cell membrane. Its function is as follows. Water channel required to facilitate the transport of water across membranes. Involved in freeze tolerance, osmotolerance and cell flocculation in liquid cultures. Is non-functional in most laboratory strains. The polypeptide is Aquaporin-like protein 2 (AQY2-2) (Saccharomyces cerevisiae (strain RM11-1a) (Baker's yeast)).